Here is a 546-residue protein sequence, read N- to C-terminus: Chromosomal replication initiator protein DnaA (546 aa).

The tract at residues 1 to 85 (MSDPQAALRA…TRALSQHMGR (85 aa)) is domain I, interacts with DnaA modulators. Positions 85 to 204 (RPCSLAVTIA…EPAHNPNREK (120 aa)) are domain II. Pro residues predominate over residues 96 to 111 (PPQPAPQEEPPAPAPQ). The tract at residues 96 to 209 (PPQPAPQEEP…PNREKSLNPK (114 aa)) is disordered. The span at 126–145 (QTQAFQQPTQSTQPAPASQP) shows a compositional bias: low complexity. The span at 191–209 (IPREEPAHNPNREKSLNPK) shows a compositional bias: basic and acidic residues. Residues 205–421 (SLNPKHTFEN…GALIRVSAYS (217 aa)) are domain III, AAA+ region. ATP is bound by residues glycine 249, glycine 251, lysine 252, and threonine 253. Residues 422 to 546 (SLVNEPISLE…TQRVKNHNQR (125 aa)) are domain IV, binds dsDNA.

Belongs to the DnaA family. As to quaternary structure, oligomerizes as a right-handed, spiral filament on DNA at oriC.

It is found in the cytoplasm. In terms of biological role, plays an essential role in the initiation and regulation of chromosomal replication. ATP-DnaA binds to the origin of replication (oriC) to initiate formation of the DNA replication initiation complex once per cell cycle. Binds the DnaA box (a 9 base pair repeat at the origin) and separates the double-stranded (ds)DNA. Forms a right-handed helical filament on oriC DNA; dsDNA binds to the exterior of the filament while single-stranded (ss)DNA is stabiized in the filament's interior. The ATP-DnaA-oriC complex binds and stabilizes one strand of the AT-rich DNA unwinding element (DUE), permitting loading of DNA polymerase. After initiation quickly degrades to an ADP-DnaA complex that is not apt for DNA replication. Binds acidic phospholipids. This Corynebacterium aurimucosum (strain ATCC 700975 / DSM 44827 / CIP 107346 / CN-1) (Corynebacterium nigricans) protein is Chromosomal replication initiator protein DnaA.